Consider the following 244-residue polypeptide: tRNA (guanine-N(1)-)-methyltransferase (244 aa).

Residues Gly-113 and 132–137 (IGDYVL) each bind S-adenosyl-L-methionine.

This sequence belongs to the RNA methyltransferase TrmD family. In terms of assembly, homodimer.

The protein localises to the cytoplasm. The enzyme catalyses guanosine(37) in tRNA + S-adenosyl-L-methionine = N(1)-methylguanosine(37) in tRNA + S-adenosyl-L-homocysteine + H(+). Its function is as follows. Specifically methylates guanosine-37 in various tRNAs. The polypeptide is tRNA (guanine-N(1)-)-methyltransferase (Shouchella clausii (strain KSM-K16) (Alkalihalobacillus clausii)).